We begin with the raw amino-acid sequence, 210 residues long: V-type ATP synthase subunit D (210 aa).

This sequence belongs to the V-ATPase D subunit family.

In terms of biological role, produces ATP from ADP in the presence of a proton gradient across the membrane. This Coprothermobacter proteolyticus (strain ATCC 35245 / DSM 5265 / OCM 4 / BT) protein is V-type ATP synthase subunit D.